The chain runs to 400 residues: Elongation factor Tu 1 (400 aa).

The region spanning 10 to 209 (KPHLNIGTIG…AVDSYIPLPQ (200 aa)) is the tr-type G domain. The tract at residues 19-26 (GHIDHGKT) is G1. Residue 19–26 (GHIDHGKT) coordinates GTP. Position 26 (threonine 26) interacts with Mg(2+). A G2 region spans residues 60–64 (GITIN). A G3 region spans residues 81-84 (DCPG). GTP is bound by residues 81–85 (DCPGH) and 136–139 (NKTD). Residues 136 to 139 (NKTD) are G4. Residues 174 to 176 (SAL) form a G5 region.

Belongs to the TRAFAC class translation factor GTPase superfamily. Classic translation factor GTPase family. EF-Tu/EF-1A subfamily. Monomer.

The protein resides in the cytoplasm. It carries out the reaction GTP + H2O = GDP + phosphate + H(+). In terms of biological role, GTP hydrolase that promotes the GTP-dependent binding of aminoacyl-tRNA to the A-site of ribosomes during protein biosynthesis. This chain is Elongation factor Tu 1, found in Syntrophomonas wolfei subsp. wolfei (strain DSM 2245B / Goettingen).